We begin with the raw amino-acid sequence, 145 residues long: Lysozyme-like protein 4 (145 aa).

An N-terminal signal peptide occupies residues 1–19 (MQLYLVLLLISYLLTPIGA). A C-type lysozyme domain is found at 20 to 145 (SILGRCVVAK…LDRWLDGCEL (126 aa)). Cystine bridges form between C25/C143, C49/C130, C84/C95, and C91/C109. The active site involves E54.

It belongs to the glycosyl hydrolase 22 family. Monomer. In terms of tissue distribution, expressed in the brain, lung, ovary, uterus and testis. In testis expressed in the germinal epithelium and on the maturing spermatozoa (at protein level).

The protein localises to the secreted. It localises to the cytoplasmic vesicle. It is found in the secretory vesicle. The protein resides in the acrosome. Its subcellular location is the cell projection. The protein localises to the cilium. It localises to the flagellum. In terms of biological role, may be involved in fertilization. Has no detectable bacteriolytic and lysozyme activities in vitro. The chain is Lysozyme-like protein 4 (Lyzl4) from Rattus norvegicus (Rat).